The following is a 663-amino-acid chain: UvrABC system protein B (663 aa).

Residues 31-418 (DNIEGGEKAQ…TDTVVEQIIR (388 aa)) form the Helicase ATP-binding domain. 44-51 (GATGTGKT) is an ATP binding site. The Beta-hairpin signature appears at 97–120 (YYDYYQPEAYVPSSDTYIEKDSSV). In terms of domain architecture, Helicase C-terminal spans 435–601 (QMDDLLGEIN…TIKKEIRDLI (167 aa)). Residues 627–662 (QAEIKALQKQMQEAAELLDFELAAQIRDVILKLKAI) enclose the UVR domain.

The protein belongs to the UvrB family. As to quaternary structure, forms a heterotetramer with UvrA during the search for lesions. Interacts with UvrC in an incision complex.

Its subcellular location is the cytoplasm. The UvrABC repair system catalyzes the recognition and processing of DNA lesions. A damage recognition complex composed of 2 UvrA and 2 UvrB subunits scans DNA for abnormalities. Upon binding of the UvrA(2)B(2) complex to a putative damaged site, the DNA wraps around one UvrB monomer. DNA wrap is dependent on ATP binding by UvrB and probably causes local melting of the DNA helix, facilitating insertion of UvrB beta-hairpin between the DNA strands. Then UvrB probes one DNA strand for the presence of a lesion. If a lesion is found the UvrA subunits dissociate and the UvrB-DNA preincision complex is formed. This complex is subsequently bound by UvrC and the second UvrB is released. If no lesion is found, the DNA wraps around the other UvrB subunit that will check the other stand for damage. The chain is UvrABC system protein B from Streptococcus agalactiae serotype Ia (strain ATCC 27591 / A909 / CDC SS700).